The primary structure comprises 86 residues: Cell division topological specificity factor (86 aa).

It belongs to the MinE family.

Prevents the cell division inhibition by proteins MinC and MinD at internal division sites while permitting inhibition at polar sites. This ensures cell division at the proper site by restricting the formation of a division septum at the midpoint of the long axis of the cell. The chain is Cell division topological specificity factor from Photobacterium profundum (strain SS9).